The primary structure comprises 447 residues: Transducin beta-like protein 2 (447 aa).

Residues 38–72 (RSGRPACQKANGFPPDKSSGSKKQKQYQRIRKEKP) are disordered. Positions 57–69 (GSKKQKQYQRIRK) are enriched in basic residues. WD repeat units lie at residues 88–127 (SHSGNISCMDFSSNGKYLATCADDRTIRIWSTKDFLQREH), 134–174 (VELD…DGGY), 186–226 (KHKA…STIN), 228–267 (NQMNNTHAAVSPCGRFVASCGFTPDVKVWEVCFGKKGEFQ), 277–316 (GHSAAVHSFAFSNDSRRMASVSKDGTWKLWDTDVEYKKKQ), 329–367 (AAGAAPCRLALSPNAQVLALASGSSIHLYNTRRGEKEEC), and 371–409 (VHGECIANLSFDITGRFLASCGDRAVRLFHNTPGHRAMV). A Glycyl lysine isopeptide (Lys-Gly) (interchain with G-Cter in SUMO2) cross-link involves residue Lys-168. Position 433 is a phosphothreonine; by ATM or ATR (Thr-433).

The polypeptide is Transducin beta-like protein 2 (TBL2) (Homo sapiens (Human)).